Reading from the N-terminus, the 167-residue chain is Ubiquitin-conjugating enzyme E2 14 (167 aa).

Ala2 is subject to N-acetylalanine. Residues 5–165 (QASLLLQKQL…VSRCVRRSQE (161 aa)) enclose the UBC core domain. Residue Cys90 is the Glycyl thioester intermediate of the active site.

It belongs to the ubiquitin-conjugating enzyme family.

The enzyme catalyses S-ubiquitinyl-[E1 ubiquitin-activating enzyme]-L-cysteine + [E2 ubiquitin-conjugating enzyme]-L-cysteine = [E1 ubiquitin-activating enzyme]-L-cysteine + S-ubiquitinyl-[E2 ubiquitin-conjugating enzyme]-L-cysteine.. It participates in protein modification; protein ubiquitination. In terms of biological role, accepts the ubiquitin from the E1 complex and catalyzes its covalent attachment to other proteins. Involved in the formation of multiubiquitin chains. Signal the protein for selective degradation. The polypeptide is Ubiquitin-conjugating enzyme E2 14 (UBC14) (Arabidopsis thaliana (Mouse-ear cress)).